Consider the following 250-residue polypeptide: ATP synthase subunit a (250 aa).

The next 6 helical transmembrane spans lie at 25–45 (VSFT…FFFL), 84–104 (VFFP…VIGL), 115–135 (IVVT…YGFY), 141–161 (FLHL…IVLI), 187–209 (ALKV…WLGA), and 223–243 (ELLV…IYLN).

Belongs to the ATPase A chain family. F-type ATPases have 2 components, CF(1) - the catalytic core - and CF(0) - the membrane proton channel. CF(1) has five subunits: alpha(3), beta(3), gamma(1), delta(1), epsilon(1). CF(0) has three main subunits: a(1), b(2) and c(9-12). The alpha and beta chains form an alternating ring which encloses part of the gamma chain. CF(1) is attached to CF(0) by a central stalk formed by the gamma and epsilon chains, while a peripheral stalk is formed by the delta and b chains.

The protein resides in the cell inner membrane. Key component of the proton channel; it plays a direct role in the translocation of protons across the membrane. The polypeptide is ATP synthase subunit a (Azorhizobium caulinodans (strain ATCC 43989 / DSM 5975 / JCM 20966 / LMG 6465 / NBRC 14845 / NCIMB 13405 / ORS 571)).